Reading from the N-terminus, the 368-residue chain is Phosphoserine aminotransferase (368 aa).

Position 42 (Arg42) interacts with L-glutamate. Pyridoxal 5'-phosphate contacts are provided by residues 76–77 (AS), Trp102, Thr152, Asp179, and Gln202. Lys203 bears the N6-(pyridoxal phosphate)lysine mark. 245–246 (NT) is a binding site for pyridoxal 5'-phosphate.

The protein belongs to the class-V pyridoxal-phosphate-dependent aminotransferase family. SerC subfamily. Homodimer. The cofactor is pyridoxal 5'-phosphate.

Its subcellular location is the cytoplasm. The catalysed reaction is O-phospho-L-serine + 2-oxoglutarate = 3-phosphooxypyruvate + L-glutamate. The enzyme catalyses 4-(phosphooxy)-L-threonine + 2-oxoglutarate = (R)-3-hydroxy-2-oxo-4-phosphooxybutanoate + L-glutamate. It functions in the pathway amino-acid biosynthesis; L-serine biosynthesis; L-serine from 3-phospho-D-glycerate: step 2/3. Its pathway is cofactor biosynthesis; pyridoxine 5'-phosphate biosynthesis; pyridoxine 5'-phosphate from D-erythrose 4-phosphate: step 3/5. Its function is as follows. Catalyzes the reversible conversion of 3-phosphohydroxypyruvate to phosphoserine and of 3-hydroxy-2-oxo-4-phosphonooxybutanoate to phosphohydroxythreonine. The sequence is that of Phosphoserine aminotransferase from Nitrosomonas europaea (strain ATCC 19718 / CIP 103999 / KCTC 2705 / NBRC 14298).